We begin with the raw amino-acid sequence, 375 residues long: tRNA-specific 2-thiouridylase MnmA (375 aa).

ATP contacts are provided by residues 12–19 (GMSGGVDS) and methionine 38. Residues 98–100 (NPD) form an interaction with target base in tRNA region. Residue cysteine 103 is the Nucleophile of the active site. Cysteines 103 and 200 form a disulfide. Glycine 127 is an ATP binding site. The interval 150-152 (KDQ) is interaction with tRNA. Cysteine 200 serves as the catalytic Cysteine persulfide intermediate. Residues 312–313 (RY) form an interaction with tRNA region.

The protein belongs to the MnmA/TRMU family.

It is found in the cytoplasm. The catalysed reaction is S-sulfanyl-L-cysteinyl-[protein] + uridine(34) in tRNA + AH2 + ATP = 2-thiouridine(34) in tRNA + L-cysteinyl-[protein] + A + AMP + diphosphate + H(+). Catalyzes the 2-thiolation of uridine at the wobble position (U34) of tRNA, leading to the formation of s(2)U34. This chain is tRNA-specific 2-thiouridylase MnmA, found in Levilactobacillus brevis (strain ATCC 367 / BCRC 12310 / CIP 105137 / JCM 1170 / LMG 11437 / NCIMB 947 / NCTC 947) (Lactobacillus brevis).